The following is a 584-amino-acid chain: FAD-linked oxidoreductase OXR2 (584 aa).

The first 22 residues, 1-22 (MRSIISAFILSLNFCTQPLVRG), serve as a signal peptide directing secretion. Asn75, Asn97, Asn115, Asn225, Asn302, Asn321, and Asn507 each carry an N-linked (GlcNAc...) asparagine glycan. An FAD-binding PCMH-type domain is found at 128–310 (LGMLSEKYIA…LNATFKVEPV (183 aa)).

The protein belongs to the oxygen-dependent FAD-linked oxidoreductase family. FAD serves as cofactor.

The protein operates within secondary metabolite biosynthesis. FAD-linked oxidoreductase; part of the gene cluster that mediates the biosynthesis of a tyrosine-derived cytochalasan acting as a fungal signal recognized by resistant rice plants and leads to avirulence in Pi33 resistant rice cultivars. The first step in the pathway is catalyzed by the hybrid PKS-NRPS ACE1, assisted by the enoyl reductase RAP1, that are responsible for fusion of the tyrosine precursor and the polyketide backbone. The polyketide synthase module (PKS) of ACE1 is responsible for the synthesis of the polyketide backbone and the downstream nonribosomal peptide synthetase (NRPS) amidates the carboxyl end of the polyketide with the tyrosine precursor. Because ACE1 lacks a designated enoylreductase (ER) domain, the required activity is provided the enoyl reductase RAP1. Reduction by the hydrolyase ORFZ, followed by dehydration and intra-molecular Diels-Alder cyclization by the Diels-Alderase ORF3 then yield the required isoindolone-fused macrocycle. A number of oxidative steps catalyzed by the tailoring enzymes identified within the cluster, including cytochrome P450 monooxygenases CYP1 to CYP4, the FAD-linked oxidoreductase OXR2 and the short-chain dehydrogenase/reductase OXR1, are further required to afford the final cytochalasans that confer avirulence and which have still to be identified. The monooxygenase CYP1 has been shown to be a site-selective C-18 hydroxylase whereas the function of CYP3 is the site-selective epoxidation of the C-6/C-7 olefin that is present in some intermediate compounds. Finally, SYN2 and RAP2 are not required for avirulence in Pi33 resistant rice cultivars. The polypeptide is FAD-linked oxidoreductase OXR2 (Pyricularia oryzae (strain 70-15 / ATCC MYA-4617 / FGSC 8958) (Rice blast fungus)).